We begin with the raw amino-acid sequence, 133 residues long: Beta-synuclein (133 aa).

Repeat copies occupy residues 20–30 (EKTKQGVTEAA) and 31–41 (EKTKEGVLYVG). A 4 X 11 AA tandem repeats of [EGS]-K-T-K-[EQ]-[GQ]-V-X(4) region spans residues 20–66 (EKTKQGVTEAAEKTKEGVLYVGSKTSGVVQGVASVAEKTKEQASHLG). A 3; approximate repeat occupies 42–55 (SKTSGVVQGVASVA). Ser-45 carries the post-translational modification Phosphoserine. Repeat 4 spans residues 56 to 66 (EKTKEQASHLG). Residues 96 to 133 (EVAQEAAEEPLIEPLMEPEGESYEDSPQEEYQEYEPEA) are disordered. Over residues 97-133 (VAQEAAEEPLIEPLMEPEGESYEDSPQEEYQEYEPEA) the composition is skewed to acidic residues. Ser-117 carries the phosphoserine; by BARK1, CK2 and GRK5 modification.

It belongs to the synuclein family. Phosphorylated. Phosphorylation by G-protein coupled receptor kinases (GRK) is more efficient than phosphorylation by CK1, CK2 and CaM-kinase II. Highly expressed in the brain.

Its subcellular location is the cytoplasm. In terms of biological role, may be involved in neuronal plasticity. This Mus musculus (Mouse) protein is Beta-synuclein (Sncb).